Reading from the N-terminus, the 178-residue chain is Large ribosomal subunit protein uL6 (178 aa).

Belongs to the universal ribosomal protein uL6 family. As to quaternary structure, part of the 50S ribosomal subunit.

This protein binds to the 23S rRNA, and is important in its secondary structure. It is located near the subunit interface in the base of the L7/L12 stalk, and near the tRNA binding site of the peptidyltransferase center. This is Large ribosomal subunit protein uL6 from Helicobacter pylori (strain HPAG1).